Here is a 65-residue protein sequence, read N- to C-terminus: Large ribosomal subunit protein uL29 (65 aa).

The protein belongs to the universal ribosomal protein uL29 family.

This is Large ribosomal subunit protein uL29 from Buchnera aphidicola subsp. Cinara cedri (strain Cc).